The primary structure comprises 163 residues: SsrA-binding protein (163 aa).

Positions arginine 140–leucine 157 are enriched in basic and acidic residues. Residues arginine 140–arginine 163 are disordered.

This sequence belongs to the SmpB family.

It localises to the cytoplasm. Its function is as follows. Required for rescue of stalled ribosomes mediated by trans-translation. Binds to transfer-messenger RNA (tmRNA), required for stable association of tmRNA with ribosomes. tmRNA and SmpB together mimic tRNA shape, replacing the anticodon stem-loop with SmpB. tmRNA is encoded by the ssrA gene; the 2 termini fold to resemble tRNA(Ala) and it encodes a 'tag peptide', a short internal open reading frame. During trans-translation Ala-aminoacylated tmRNA acts like a tRNA, entering the A-site of stalled ribosomes, displacing the stalled mRNA. The ribosome then switches to translate the ORF on the tmRNA; the nascent peptide is terminated with the 'tag peptide' encoded by the tmRNA and targeted for degradation. The ribosome is freed to recommence translation, which seems to be the essential function of trans-translation. The sequence is that of SsrA-binding protein from Anaeromyxobacter dehalogenans (strain 2CP-C).